The following is a 188-amino-acid chain: Probable nicotinate-nucleotide adenylyltransferase (188 aa).

Belongs to the NadD family.

The enzyme catalyses nicotinate beta-D-ribonucleotide + ATP + H(+) = deamido-NAD(+) + diphosphate. It functions in the pathway cofactor biosynthesis; NAD(+) biosynthesis; deamido-NAD(+) from nicotinate D-ribonucleotide: step 1/1. Functionally, catalyzes the reversible adenylation of nicotinate mononucleotide (NaMN) to nicotinic acid adenine dinucleotide (NaAD). This Solibacter usitatus (strain Ellin6076) protein is Probable nicotinate-nucleotide adenylyltransferase.